Reading from the N-terminus, the 154-residue chain is MITLYEAAIKTLITHRKQILKHPDSREILLALGLYWDKTHILVKCRECGKMSLTGKHSTKCININCLLILAIKKKNKRMVDTLIRMGADVTYIHLLKNKIKLSYNQLSMLKSNSQISLKELHAICYLLYGRLPKKIKQGMQLCKTMAGLCGELL.

The protein belongs to the asfivirus MGF 300 family.

Functionally, plays a role in virus cell tropism, and may be required for efficient virus replication in macrophages. The sequence is that of Protein MGF 300-2R from Ornithodoros (relapsing fever ticks).